The primary structure comprises 343 residues: Holliday junction branch migration complex subunit RuvB (343 aa).

Residues 4–184 (SDRLISAKAG…FGIVQRLEFY (181 aa)) are large ATPase domain (RuvB-L). Residues I23, R24, G65, K68, T69, T70, 131–133 (EDY), R174, Y184, and R221 contribute to the ATP site. T69 is a Mg(2+) binding site. Positions 185 to 255 (NHQDLTHIIT…IADQALNMLK (71 aa)) are small ATPAse domain (RuvB-S). The interval 258-343 (SQGFDHMDRR…RSGREDDLFE (86 aa)) is head domain (RuvB-H). 3 residues coordinate DNA: R294, R313, and R318.

Belongs to the RuvB family. In terms of assembly, homohexamer. Forms an RuvA(8)-RuvB(12)-Holliday junction (HJ) complex. HJ DNA is sandwiched between 2 RuvA tetramers; dsDNA enters through RuvA and exits via RuvB. An RuvB hexamer assembles on each DNA strand where it exits the tetramer. Each RuvB hexamer is contacted by two RuvA subunits (via domain III) on 2 adjacent RuvB subunits; this complex drives branch migration. In the full resolvosome a probable DNA-RuvA(4)-RuvB(12)-RuvC(2) complex forms which resolves the HJ.

It localises to the cytoplasm. It carries out the reaction ATP + H2O = ADP + phosphate + H(+). In terms of biological role, the RuvA-RuvB-RuvC complex processes Holliday junction (HJ) DNA during genetic recombination and DNA repair, while the RuvA-RuvB complex plays an important role in the rescue of blocked DNA replication forks via replication fork reversal (RFR). RuvA specifically binds to HJ cruciform DNA, conferring on it an open structure. The RuvB hexamer acts as an ATP-dependent pump, pulling dsDNA into and through the RuvAB complex. RuvB forms 2 homohexamers on either side of HJ DNA bound by 1 or 2 RuvA tetramers; 4 subunits per hexamer contact DNA at a time. Coordinated motions by a converter formed by DNA-disengaged RuvB subunits stimulates ATP hydrolysis and nucleotide exchange. Immobilization of the converter enables RuvB to convert the ATP-contained energy into a lever motion, pulling 2 nucleotides of DNA out of the RuvA tetramer per ATP hydrolyzed, thus driving DNA branch migration. The RuvB motors rotate together with the DNA substrate, which together with the progressing nucleotide cycle form the mechanistic basis for DNA recombination by continuous HJ branch migration. Branch migration allows RuvC to scan DNA until it finds its consensus sequence, where it cleaves and resolves cruciform DNA. In Marinobacter nauticus (strain ATCC 700491 / DSM 11845 / VT8) (Marinobacter aquaeolei), this protein is Holliday junction branch migration complex subunit RuvB.